The chain runs to 90 residues: Progonadoliberin-1 (90 aa).

Residues 1–24 (MSRHVTVVLLLAIVLLLSSHMIHG) form the signal peptide. Position 25 is a pyrrolidone carboxylic acid (Gln-25). Glycine amide is present on Gly-34.

Belongs to the GnRH family. In terms of tissue distribution, forebrain.

The protein localises to the secreted. Its function is as follows. Stimulates the secretion of gonadotropins. This is Progonadoliberin-1 (gnrh1) from Aquarana catesbeiana (American bullfrog).